The following is a 157-amino-acid chain: Phosphopantetheine adenylyltransferase (157 aa).

Ser8 is a binding site for substrate. Residues 8–9 and His16 each bind ATP; that span reads SF. Residues Lys40, Leu72, and Arg86 each contribute to the substrate site. ATP-binding positions include 87 to 89, Glu97, and 121 to 127; these read GLR and FGTISSS.

It belongs to the bacterial CoaD family. As to quaternary structure, homohexamer. Mg(2+) is required as a cofactor.

The protein resides in the cytoplasm. The enzyme catalyses (R)-4'-phosphopantetheine + ATP + H(+) = 3'-dephospho-CoA + diphosphate. It participates in cofactor biosynthesis; coenzyme A biosynthesis; CoA from (R)-pantothenate: step 4/5. Reversibly transfers an adenylyl group from ATP to 4'-phosphopantetheine, yielding dephospho-CoA (dPCoA) and pyrophosphate. The chain is Phosphopantetheine adenylyltransferase from Cutibacterium acnes (strain DSM 16379 / KPA171202) (Propionibacterium acnes).